We begin with the raw amino-acid sequence, 407 residues long: Imidazolonepropionase (407 aa).

Fe(3+) contacts are provided by H68 and H70. Zn(2+) contacts are provided by H68 and H70. 4-imidazolone-5-propanoate is bound by residues R77, Y140, and H173. Residue Y140 coordinates N-formimidoyl-L-glutamate. H238 lines the Fe(3+) pocket. H238 is a Zn(2+) binding site. Q241 contributes to the 4-imidazolone-5-propanoate binding site. D313 is a binding site for Fe(3+). D313 serves as a coordination point for Zn(2+). N315 and G317 together coordinate N-formimidoyl-L-glutamate. Position 318 (T318) interacts with 4-imidazolone-5-propanoate.

This sequence belongs to the metallo-dependent hydrolases superfamily. HutI family. It depends on Zn(2+) as a cofactor. Fe(3+) is required as a cofactor.

Its subcellular location is the cytoplasm. It carries out the reaction 4-imidazolone-5-propanoate + H2O = N-formimidoyl-L-glutamate. Its pathway is amino-acid degradation; L-histidine degradation into L-glutamate; N-formimidoyl-L-glutamate from L-histidine: step 3/3. In terms of biological role, catalyzes the hydrolytic cleavage of the carbon-nitrogen bond in imidazolone-5-propanoate to yield N-formimidoyl-L-glutamate. It is the third step in the universal histidine degradation pathway. In Burkholderia orbicola (strain MC0-3), this protein is Imidazolonepropionase.